Consider the following 198-residue polypeptide: DnaJ homolog subfamily C member 12 (198 aa).

Position 1 is an N-acetylmethionine (Met1). Positions Asp14 to Arg79 constitute a J domain. The segment covering Glu114–Glu156 has biased composition (basic and acidic residues). Residues Glu114–Phe169 form a disordered region. Residues Ser160, Ser166, and Ser182 each carry the phosphoserine modification.

As to quaternary structure, interacts with HSPA8. Interacts with TPH1. Interacts with TPH2. In terms of tissue distribution, expressed at high levels in brain, heart, and testis, and at reduced levels in kidney and stomach.

Its subcellular location is the cytoplasm. In terms of biological role, probable co-chaperone that participates in the proper folding of biopterin-dependent aromatic amino acid hydroxylases, which include phenylalanine-4-hydroxylase (PAH), tyrosine 3-monooxygenase (TH) and peripheral and neuronal tryptophan hydroxylases (TPH1 and TPH2). The sequence is that of DnaJ homolog subfamily C member 12 (DNAJC12) from Homo sapiens (Human).